Reading from the N-terminus, the 247-residue chain is Sortase A (247 aa).

Over 1-9 (MRNKKKLHG) the chain is Cytoplasmic. Residues 10-30 (FFNFVRWLLVVLLIIVGLALV) traverse the membrane as a helical segment. At 31–247 (FNKPIRNAFI…FSKKYNQINL (217 aa)) the chain is on the extracellular side. The active-site Proton donor/acceptor is His140. Catalysis depends on Cys206, which acts as the Acyl-thioester intermediate.

This sequence belongs to the bacterial sortase family. Class A subfamily.

The protein resides in the cell membrane. In terms of biological role, transpeptidase that anchors surface proteins to the cell wall. Recognizes and modifies its substrate by proteolytic cleavage of a C-terminal sorting signal. Following cleavage, a covalent intermediate is formed via a thioester bond between the sortase and its substrate, which is then transferred and covalently attached to the cell wall. This sortase recognizes a Leu-Pro-x-Thr-Gly (LPXTG) motif, which is cleaved by the sortase between the threonine and glycine residues. Essential for adherence to eukaryotic cells and for binding to fibronectin and fibrinogen. The sequence is that of Sortase A from Streptococcus agalactiae serotype III (strain NEM316).